Consider the following 632-residue polypeptide: Cell pattern formation-associated protein stuA (632 aa).

Residues 1 to 20 (MNQTQSYMDVHTSHFSSPQP) are compositionally biased toward polar residues. Residues 1-27 (MNQTQSYMDVHTSHFSSPQPYGSHGAT) form a disordered region. An HTH APSES-type domain is found at 128–234 (RVTATLWEDE…HNIGGLLYHP (107 aa)). Residues 162 to 183 (GTKLLNVAGMTRGRRDGILKSE) constitute a DNA-binding region (H-T-H motif). 4 disordered regions span residues 246 to 315 (DSQQ…ASSL), 340 to 386 (QNVP…KSYY), 403 to 460 (AHSL…QQEP), and 473 to 632 (NRNS…MRRR). Polar residues-rich tracts occupy residues 254 to 264 (GSQTARTSQGP), 275 to 295 (MNGS…QTNG), 340 to 354 (QNVP…TRSM), and 364 to 376 (GNNL…YQNQ). Residues 377-386 (PAYDSSKSYY) are compositionally biased toward low complexity. Positions 428-438 (EQEHDEVKVDR) are enriched in basic and acidic residues. Over residues 473–506 (NRNSYTYTTNPSVSSLSGDHSQLGGSPSHQNGSD) the composition is skewed to polar residues. Over residues 558 to 576 (AYASNYSGYSSVNGSSMGS) the composition is skewed to low complexity. The segment at 578-604 (KRMRDDDDDHLSRSDGRENEYETKRRK) is nuclear localization domain. A compositionally biased stretch (basic and acidic residues) spans 579–600 (RMRDDDDDHLSRSDGRENEYET).

It belongs to the EFG1/PHD1/stuA family.

It localises to the nucleus. Its function is as follows. Transcription factor that regulates asexual reproduction. Binds the StuA-response elements (StRE) with the consensus sequence 5'-(A/T)CGCG(T/A)N(A/C)-3' at the promoters of target genes. Required for accurate spatial organization of the developing conidiophore. Primarily involved in the formation of the uninucleate sterigmata, which arise by budding in this multicellular structure. Required for metula and phialide formation during conidiation but is not required for dimorphic growth. This chain is Cell pattern formation-associated protein stuA, found in Talaromyces marneffei (Penicillium marneffei).